The chain runs to 152 residues: Transcriptional regulator MraZ (152 aa).

SpoVT-AbrB domains follow at residues 5-52 (ASAI…PIHE) and 81-124 (AHEV…DEQA).

This sequence belongs to the MraZ family. In terms of assembly, forms oligomers.

Its subcellular location is the cytoplasm. It localises to the nucleoid. The sequence is that of Transcriptional regulator MraZ from Shewanella putrefaciens (strain CN-32 / ATCC BAA-453).